The sequence spans 226 residues: 2-C-methyl-D-erythritol 4-phosphate cytidylyltransferase (226 aa).

It belongs to the IspD/TarI cytidylyltransferase family. IspD subfamily.

The enzyme catalyses 2-C-methyl-D-erythritol 4-phosphate + CTP + H(+) = 4-CDP-2-C-methyl-D-erythritol + diphosphate. The protein operates within isoprenoid biosynthesis; isopentenyl diphosphate biosynthesis via DXP pathway; isopentenyl diphosphate from 1-deoxy-D-xylulose 5-phosphate: step 2/6. Functionally, catalyzes the formation of 4-diphosphocytidyl-2-C-methyl-D-erythritol from CTP and 2-C-methyl-D-erythritol 4-phosphate (MEP). In Bacillus thuringiensis (strain Al Hakam), this protein is 2-C-methyl-D-erythritol 4-phosphate cytidylyltransferase.